The following is a 502-amino-acid chain: CBL-interacting protein kinase 11 (502 aa).

In terms of domain architecture, Protein kinase spans Tyr12 to Tyr267. Residues Leu18–Val26 and Lys41 contribute to the ATP site. The Proton acceptor role is filled by Asp135. The activation loop stretch occupies residues Asp153 to Glu182. An NAF domain is found at Ala297–Glu333. The PPI stretch occupies residues Gln339–Val367. A disordered region spans residues Leu447–Asn502. Residues Pro461–Gln472 are compositionally biased toward low complexity. Residues Thr493 to Asn502 are compositionally biased toward polar residues.

This sequence belongs to the protein kinase superfamily. CAMK Ser/Thr protein kinase family. SNF1 subfamily. Requires Mn(2+) as cofactor.

It catalyses the reaction L-seryl-[protein] + ATP = O-phospho-L-seryl-[protein] + ADP + H(+). The enzyme catalyses L-threonyl-[protein] + ATP = O-phospho-L-threonyl-[protein] + ADP + H(+). Functionally, CIPK serine-threonine protein kinases interact with CBL proteins. Binding of a CBL protein to the regulatory NAF domain of CIPK protein lead to the activation of the kinase in a calcium-dependent manner. This Oryza sativa subsp. japonica (Rice) protein is CBL-interacting protein kinase 11 (CIPK11).